We begin with the raw amino-acid sequence, 373 residues long: Superinfection exclusion protein (373 aa).

The signal sequence occupies residues 1 to 15; sequence MIVLLILSLACTAFT.

It belongs to the serpin family. Orthopoxvirus OPG040 subfamily. Interacts with A56 protein.

It is found in the virion membrane. Its subcellular location is the host cell membrane. Prevents cell to cell fusion via its interaction with A56 protein. The A56-K2 complex associates with components of the entry fusion complex (EFC) presumably to avoid superinfection and syncytium formation. In Homo sapiens (Human), this protein is Superinfection exclusion protein (OPG040).